The primary structure comprises 44 residues: Photosystem I reaction center subunit IX (44 aa).

The chain crosses the membrane as a helical span at residues 7–27 (YLSTAPVLATLWFSSLAGLLI).

The protein belongs to the PsaJ family.

Its subcellular location is the plastid. It is found in the chloroplast thylakoid membrane. Its function is as follows. May help in the organization of the PsaE and PsaF subunits. In Welwitschia mirabilis (Tree tumbo), this protein is Photosystem I reaction center subunit IX.